The chain runs to 664 residues: Glycine--tRNA ligase beta subunit (664 aa).

This sequence belongs to the class-II aminoacyl-tRNA synthetase family. In terms of assembly, tetramer of two alpha and two beta subunits.

It is found in the cytoplasm. It carries out the reaction tRNA(Gly) + glycine + ATP = glycyl-tRNA(Gly) + AMP + diphosphate. This Rickettsia typhi (strain ATCC VR-144 / Wilmington) protein is Glycine--tRNA ligase beta subunit.